The primary structure comprises 339 residues: uncharacterized protein (339 aa).

2 consecutive VOC domains span residues 2-127 and 141-276; these read EFDY…VRSE and TIDH…CLEI. The Fe cation site is built by His-144, His-222, and Glu-306.

It belongs to the 4HPPD family. It depends on Fe cation as a cofactor.

This is an uncharacterized protein from Synechocystis sp. (strain ATCC 27184 / PCC 6803 / Kazusa).